The following is a 612-amino-acid chain: Threonine--tRNA ligase (612 aa).

The tract at residues 218 to 509 (DHRKLGVELG…LSEHFGGNFP (292 aa)) is catalytic. C310, H361, and H486 together coordinate Zn(2+).

It belongs to the class-II aminoacyl-tRNA synthetase family. In terms of assembly, homodimer. Requires Zn(2+) as cofactor.

Its subcellular location is the cytoplasm. It carries out the reaction tRNA(Thr) + L-threonine + ATP = L-threonyl-tRNA(Thr) + AMP + diphosphate + H(+). In terms of biological role, catalyzes the attachment of threonine to tRNA(Thr) in a two-step reaction: L-threonine is first activated by ATP to form Thr-AMP and then transferred to the acceptor end of tRNA(Thr). Also edits incorrectly charged L-seryl-tRNA(Thr). The chain is Threonine--tRNA ligase from Helicobacter pylori (strain J99 / ATCC 700824) (Campylobacter pylori J99).